The primary structure comprises 126 residues: KH homology domain-containing protein 1B (126 aa).

In terms of domain architecture, KH spans 19–78 (PLVFDMEEDQEDYIFGPDDEYLHTLEVHSNTLIQLERWFSPTGQTRVTVVGPLKARLWVM).

This sequence belongs to the KHDC1 family.

The polypeptide is KH homology domain-containing protein 1B (Khdc1b) (Mus musculus (Mouse)).